The chain runs to 151 residues: MGRMHAPGKGISQSALPYRRSVPTWLKLTADDVKEQIFKLGKKGLTPSQIGVMLRDSHGVAQVRFVTGKKILRIMKAMGLAPDLPEDLYYLIKKAVAMGKHLERNRKDKDSKFRLILVESRIHRLARYYKTKSVLPPNWKYESSTASALVA.

It belongs to the universal ribosomal protein uS15 family.

This chain is Small ribosomal subunit protein uS15 (RpS13), found in Plutella xylostella (Diamondback moth).